A 648-amino-acid polypeptide reads, in one-letter code: Interferon-induced GTP-binding protein Mx1 (648 aa).

Residue Met1 is modified to N-acetylmethionine. Residues 1–26 (MVHSDLGIEELDSPESSLNGSEDMES) form a disordered region. A Dynamin-type G domain is found at 56-329 (DLALPAIAVI…LIMHICKTLP (274 aa)). The interval 66 to 73 (GDQSSGKS) is G1 motif. 66-73 (GDQSSGKS) contacts GTP. The segment at 91–93 (VTR) is G2 motif. The interval 167 to 170 (DLPG) is G3 motif. GTP-binding positions include 167-171 (DLPGI) and 236-239 (TKPD). Residues 236–239 (TKPD) form a G4 motif region. The G5 motif stretch occupies residues 268–271 (KCRG). A bundle signaling element (BSE) region spans residues 330 to 355 (LLENQIKETHQRITEELQKYGKDIPE). Positions 355–522 (EEESEKMFCL…HFQMEQLVYC (168 aa)) are middle domain. The interval 356–618 (EESEKMFCLI…KDQYDWLLKE (263 aa)) is stalk. Residues 543–546 (KNKK) are critical for lipid-binding. Positions 560 to 648 (TDEIFQHLTA…ARQRLAKFPG (89 aa)) constitute a GED domain.

This sequence belongs to the TRAFAC class dynamin-like GTPase superfamily. Dynamin/Fzo/YdjA family. In terms of assembly, homooligomer. Oligomerizes into multimeric filamentous or ring-like structures by virtue of its stalk domain. Oligomerization is critical for GTPase activity, protein stability, and recognition of viral target structures. Interacts with TRPC1, TRPC3, TRPC4, TRPC5, TRPC6 and TRPC7. Interacts with HSPA5. Interacts with TUBB/TUBB5. Interacts with DDX39A and DDX39B. ISGylated. Ubiquitously expressed.

The protein resides in the cytoplasm. Its subcellular location is the endoplasmic reticulum membrane. It is found in the perinuclear region. The protein localises to the nucleus. Its function is as follows. Interferon-induced dynamin-like GTPase with antiviral activity against rabies virus (RABV), vesicular stomatitis virus (VSV) and murine pneumonia virus (MPV). Isoform 1 but not isoform 2 shows antiviral activity against vesicular stomatitis virus (VSV). In Bos taurus (Bovine), this protein is Interferon-induced GTP-binding protein Mx1 (MX1).